We begin with the raw amino-acid sequence, 159 residues long: MTHIRAIYTDGACEGNPGPGGWGVVIYFTDGSVHELGGHHPATTNNRMELQAAIEALKAWRQLAPGSAIALYTDSEYVLRGITEWIHHWKRRGWKTAAKKPVLNQDLWQELDALNDPLVQWHHVRGHRGDVGNERCDLIARRLSRGQPIALRTLPPPLG.

The region spanning 1 to 145 (MTHIRAIYTD…CDLIARRLSR (145 aa)) is the RNase H type-1 domain. Residues Asp-10, Glu-49, Asp-74, and Asp-137 each coordinate Mg(2+).

The protein belongs to the RNase H family. As to quaternary structure, monomer. The cofactor is Mg(2+).

It localises to the cytoplasm. The enzyme catalyses Endonucleolytic cleavage to 5'-phosphomonoester.. Functionally, endonuclease that specifically degrades the RNA of RNA-DNA hybrids. This Thermosynechococcus vestitus (strain NIES-2133 / IAM M-273 / BP-1) protein is Ribonuclease H.